Here is a 517-residue protein sequence, read N- to C-terminus: Putative lipase ATG15 (517 aa).

At 1–6 (MRASTH) the chain is on the cytoplasmic side. The chain crosses the membrane as a helical; Signal-anchor for type II membrane protein span at residues 7 to 27 (SWLLLVVVLSLSSFTVNAVIL). Residues 28–517 (EGLIPPRSHL…TNWHFTDETL (490 aa)) lie on the Lumenal side of the membrane. 3 N-linked (GlcNAc...) asparagine glycosylation sites follow: asparagine 187, asparagine 221, and asparagine 303. Serine 319 acts as the Charge relay system in catalysis. Residues 466 to 499 (GWRWPWHRGDSADDDGDSDEDTDEDDKLAVPKAR) form a disordered region. Over residues 477 to 491 (ADDDGDSDEDTDEDD) the composition is skewed to acidic residues.

It belongs to the AB hydrolase superfamily. Lipase family. In terms of assembly, binds to both phosphatidylinositol (PI) and phosphatidylinositol 3,5-bisphosphate (PIP2).

The protein localises to the endosome. It is found in the multivesicular body membrane. Its subcellular location is the prevacuolar compartment membrane. It catalyses the reaction a triacylglycerol + H2O = a diacylglycerol + a fatty acid + H(+). Functionally, lipase which is essential for lysis of subvacuolar cytoplasm to vacuole targeted bodies and intravacuolar autophagic bodies. Involved in the lysis of intravacuolar multivesicular body (MVB) vesicles. The intravacuolar membrane disintegration by ATG15 is critical to life span extension. This is Putative lipase ATG15 (ATG15) from Mycosarcoma maydis (Corn smut fungus).